The primary structure comprises 198 residues: Recombination protein RecR (198 aa).

A C4-type zinc finger spans residues 57-72; it reads CSICGRLTDDDPCSIC. A Toprim domain is found at 80–175; the sequence is TTILVLEDSR…KVTRLARGLA (96 aa).

It belongs to the RecR family.

In terms of biological role, may play a role in DNA repair. It seems to be involved in an RecBC-independent recombinational process of DNA repair. It may act with RecF and RecO. This Streptococcus pneumoniae serotype 2 (strain D39 / NCTC 7466) protein is Recombination protein RecR.